The primary structure comprises 219 residues: Swarming motility regulation protein RssB (219 aa).

Residues 2–116 form the Response regulatory domain; that stretch reads NILLVEDDLQ…ELISRVKAVN (115 aa). At Asp-51 the chain carries 4-aspartylphosphate. The ompR/PhoB-type DNA-binding region spans 124-218; that stretch reads SQTWSLGALY…VRGIGYLLKK (95 aa).

The protein resides in the cytoplasm. In terms of biological role, member of the two-component regulatory system RssA/RssB involved in regulation of swarming motility which has been shown to be inhibited by saturated fatty acids. RssA/RssB regulates cellular fatty acid composition, hemolysin production and cell surface topography. RssA/RssB negatively regulates the activity of SlhBA. It can also act as a negative regulator for the control of the swarming initiation. RssB binds its own promoter. This is Swarming motility regulation protein RssB (rssB) from Serratia marcescens.